The sequence spans 341 residues: Holliday junction branch migration complex subunit RuvB (341 aa).

Positions 1–22 (MSETAGKGVTMPEIMQSSYPDE) are disordered. A large ATPase domain (RuvB-L) region spans residues 4-193 (TAGKGVTMPE…FGIISRLEFY (190 aa)). ATP contacts are provided by residues Ile32, Arg33, Gly74, Lys77, Thr78, Thr79, 140–142 (EDY), Arg183, Tyr193, and Arg230. Thr78 lines the Mg(2+) pocket. Residues 194 to 264 (TPEELSQIIL…LVNHALQKLD (71 aa)) form a small ATPAse domain (RuvB-S) region. Residues 267–341 (EKGLDQMDRK…KAYKHLNLTD (75 aa)) form a head domain (RuvB-H) region. Residues Arg322 and Arg327 each contribute to the DNA site.

The protein belongs to the RuvB family. In terms of assembly, homohexamer. Forms an RuvA(8)-RuvB(12)-Holliday junction (HJ) complex. HJ DNA is sandwiched between 2 RuvA tetramers; dsDNA enters through RuvA and exits via RuvB. An RuvB hexamer assembles on each DNA strand where it exits the tetramer. Each RuvB hexamer is contacted by two RuvA subunits (via domain III) on 2 adjacent RuvB subunits; this complex drives branch migration. In the full resolvosome a probable DNA-RuvA(4)-RuvB(12)-RuvC(2) complex forms which resolves the HJ.

The protein localises to the cytoplasm. It carries out the reaction ATP + H2O = ADP + phosphate + H(+). In terms of biological role, the RuvA-RuvB-RuvC complex processes Holliday junction (HJ) DNA during genetic recombination and DNA repair, while the RuvA-RuvB complex plays an important role in the rescue of blocked DNA replication forks via replication fork reversal (RFR). RuvA specifically binds to HJ cruciform DNA, conferring on it an open structure. The RuvB hexamer acts as an ATP-dependent pump, pulling dsDNA into and through the RuvAB complex. RuvB forms 2 homohexamers on either side of HJ DNA bound by 1 or 2 RuvA tetramers; 4 subunits per hexamer contact DNA at a time. Coordinated motions by a converter formed by DNA-disengaged RuvB subunits stimulates ATP hydrolysis and nucleotide exchange. Immobilization of the converter enables RuvB to convert the ATP-contained energy into a lever motion, pulling 2 nucleotides of DNA out of the RuvA tetramer per ATP hydrolyzed, thus driving DNA branch migration. The RuvB motors rotate together with the DNA substrate, which together with the progressing nucleotide cycle form the mechanistic basis for DNA recombination by continuous HJ branch migration. Branch migration allows RuvC to scan DNA until it finds its consensus sequence, where it cleaves and resolves cruciform DNA. The protein is Holliday junction branch migration complex subunit RuvB of Lawsonia intracellularis (strain PHE/MN1-00).